Reading from the N-terminus, the 292-residue chain is 3-methyl-2-oxobutanoate hydroxymethyltransferase 2 (292 aa).

The Mg(2+) site is built by D52 and D91. 3-methyl-2-oxobutanoate is bound by residues 52-53 (DS), D91, and K120. E122 is a binding site for Mg(2+). Residue E189 is the Proton acceptor of the active site.

Belongs to the PanB family. As to quaternary structure, homodecamer; pentamer of dimers. Mg(2+) serves as cofactor.

It is found in the cytoplasm. It catalyses the reaction 3-methyl-2-oxobutanoate + (6R)-5,10-methylene-5,6,7,8-tetrahydrofolate + H2O = 2-dehydropantoate + (6S)-5,6,7,8-tetrahydrofolate. The protein operates within cofactor biosynthesis; (R)-pantothenate biosynthesis; (R)-pantoate from 3-methyl-2-oxobutanoate: step 1/2. Catalyzes the reversible reaction in which hydroxymethyl group from 5,10-methylenetetrahydrofolate is transferred onto alpha-ketoisovalerate to form ketopantoate. This chain is 3-methyl-2-oxobutanoate hydroxymethyltransferase 2, found in Bradyrhizobium diazoefficiens (strain JCM 10833 / BCRC 13528 / IAM 13628 / NBRC 14792 / USDA 110).